The primary structure comprises 441 residues: MDSAPSPSSLDFELSPPVLVTMTSTSSSASDNVEGADDDANTHGIFNWRDFSSCWRVSESNLYCFSLALLIWFFASFILIENLYGPKNVWLGPSSSILVEPSSIFVKSIKVKVLDYSEPGLQLYGFYRTPALDCFVNWSESRVLSISHESYKGWPYYLNSGSLLNITYTVKPQGSAVQLVVDEGHQGVPQSVLNDPAYRYNVWSWNLIEGSGMIQLEIRKSSSYYLAVANLKSKDVEVELNIDVKAVLYDTKQSFYNCNFSNGECTFNAMSLVGNSVVVTSPAASQGVSIEDEWYIRFSYQPREIAYVIGTGVVICFMLVAIQFCNRFQCSGGEGHLTEDDSARTRLLADKDDDGSSMGSCDDSYANDDADLEEFMGNDGEASNRSRRLCAICFDVPRDCFFLPCGHSVSCYECGTTMQEADGSCPICRRKMKKVKRIYTV.

The next 2 membrane-spanning stretches (helical) occupy residues 60–80 (SNLY…FILI) and 305–325 (IAYV…IQFC). Residues 390–429 (CAICFDVPRDCFFLPCGHSVSCYECGTTMQEADGSCPICR) form an RING-type zinc finger.

As to expression, expressed in the shoot apical meristems (SAM), root tips and inflorescences, and, at low levels, in floral buds and pollen.

The protein localises to the endomembrane system. Its subcellular location is the vacuole membrane. It carries out the reaction S-ubiquitinyl-[E2 ubiquitin-conjugating enzyme]-L-cysteine + [acceptor protein]-L-lysine = [E2 ubiquitin-conjugating enzyme]-L-cysteine + N(6)-ubiquitinyl-[acceptor protein]-L-lysine.. The protein operates within protein modification; protein ubiquitination. Involved in pollen mitosis II (PMII) regulation during male gametogenesis. The polypeptide is E3 ubiquitin-protein ligase APD1 (Arabidopsis thaliana (Mouse-ear cress)).